We begin with the raw amino-acid sequence, 423 residues long: Probable electron transfer flavoprotein-quinone oxidoreductase YgcN (423 aa).

I7 to L21 serves as a coordination point for FAD.

Belongs to the ETF-QO/FixC family. It depends on FAD as a cofactor.

Functionally, probably accepts electrons from YgcQ/YgcR and reduces a quinone. The chain is Probable electron transfer flavoprotein-quinone oxidoreductase YgcN (ygcN) from Escherichia coli (strain K12).